The chain runs to 343 residues: N-acetyl-gamma-glutamyl-phosphate reductase (343 aa).

The active site involves C149.

It belongs to the NAGSA dehydrogenase family. Type 1 subfamily.

The protein localises to the cytoplasm. It carries out the reaction N-acetyl-L-glutamate 5-semialdehyde + phosphate + NADP(+) = N-acetyl-L-glutamyl 5-phosphate + NADPH + H(+). The protein operates within amino-acid biosynthesis; L-arginine biosynthesis; N(2)-acetyl-L-ornithine from L-glutamate: step 3/4. In terms of biological role, catalyzes the NADPH-dependent reduction of N-acetyl-5-glutamyl phosphate to yield N-acetyl-L-glutamate 5-semialdehyde. The chain is N-acetyl-gamma-glutamyl-phosphate reductase from Methanococcus maripaludis (strain C5 / ATCC BAA-1333).